The sequence spans 260 residues: DNA repair protein RecO (260 aa).

The tract at residues 239 to 260 is disordered; sequence SAGVAAARKAGGDGSDGDEGEQ.

The protein belongs to the RecO family.

In terms of biological role, involved in DNA repair and RecF pathway recombination. This chain is DNA repair protein RecO, found in Sodalis glossinidius (strain morsitans).